The following is a 265-amino-acid chain: Secreted RxLR effector protein 146 (265 aa).

The signal sequence occupies residues 1–25; it reads MRYYTQVVAASLVATLAVVDSIVFA. The short motif at 32 to 50 is the RxLR-dEER element; the sequence is RFLRQDGATVTRGGKGEER. N-linked (GlcNAc...) asparagine glycosylation is found at Asn71 and Asn148.

This sequence belongs to the RxLR effector family.

Its subcellular location is the secreted. It is found in the host nucleus. The protein resides in the host cytoplasm. Functionally, secreted effector that completely suppresses the host cell death induced by cell death-inducing proteins. This is Secreted RxLR effector protein 146 from Plasmopara viticola (Downy mildew of grapevine).